The chain runs to 354 residues: Probable N-acetylmuramoyl-L-alanine amidase (354 aa).

The N-terminal stretch at 1 to 39 (MVKVINNFVKVNQYDRPGLKLAAVKGIVMHWTATPGASA) is a signal peptide. The region spanning 40–152 (LNERNYFNGT…YDVTNKGCPT (113 aa)) is the N-acetylmuramoyl-L-alanine amidase domain.

Belongs to the N-acetylmuramoyl-L-alanine amidase 2 family.

The protein resides in the secreted. The catalysed reaction is Hydrolyzes the link between N-acetylmuramoyl residues and L-amino acid residues in certain cell-wall glycopeptides.. This is Probable N-acetylmuramoyl-L-alanine amidase from Bacillus licheniformis.